Consider the following 226-residue polypeptide: MASQISQLACFSSTNRQFHFQSRSFPCPMIRPQSFVVKSVDGNSSETPASLSYTAEVSKPVVEKTSKPYSTVDETATNKESITEPVEEDVATQPIRAAKIHDFCFGIPYGGLVVSGGLLGFAFSRNLTSLSTGVLYGGGLLALSTLSLKIWREGKSSFPYILGQAVLSAVVFWKNFTAYSMTKKLFPAGVFAVISACMLCFYSYVVLSGGNPPPKKLKPSATSPSY.

Residues 1–39 (MASQISQLACFSSTNRQFHFQSRSFPCPMIRPQSFVVKS) constitute a chloroplast transit peptide. The segment at 66 to 87 (SKPYSTVDETATNKESITEPVE) is disordered. Positions 67 to 80 (KPYSTVDETATNKE) are enriched in polar residues. The next 3 helical transmembrane spans lie at 130–150 (LSTG…SLKI), 158–178 (FPYI…NFTA), and 186–206 (FPAG…SYVV).

It belongs to the TMEM14 family. In terms of tissue distribution, expressed in cotyledons, leaves, sepals and pollen.

It localises to the plastid. Its subcellular location is the chloroplast inner membrane. Its function is as follows. Mediates the export of free fatty acid from the plastids. Potentially prefers palmitic acid (C16:0) over oleic acid (C18:1) and stearic acid (C18:0). Not involved in fatty acid activation. Required for biogenesis of the outer pollen cell wall, in particular for the assembly of exine and pollen coat and for the release of ketone wax components. The polypeptide is Protein FATTY ACID EXPORT 1, chloroplastic (Arabidopsis thaliana (Mouse-ear cress)).